We begin with the raw amino-acid sequence, 301 residues long: N-acetylmuramic acid 6-phosphate etherase (301 aa).

Residues 57–220 (IAETFMKNGR…TTGAMIKTGK (164 aa)) form the SIS domain. Glu-85 acts as the Proton donor in catalysis. The active site involves Glu-116.

Belongs to the GCKR-like family. MurNAc-6-P etherase subfamily. Homodimer.

The catalysed reaction is N-acetyl-D-muramate 6-phosphate + H2O = N-acetyl-D-glucosamine 6-phosphate + (R)-lactate. It functions in the pathway amino-sugar metabolism; 1,6-anhydro-N-acetylmuramate degradation. It participates in amino-sugar metabolism; N-acetylmuramate degradation. The protein operates within cell wall biogenesis; peptidoglycan recycling. Functionally, specifically catalyzes the cleavage of the D-lactyl ether substituent of MurNAc 6-phosphate, producing GlcNAc 6-phosphate and D-lactate. Together with AnmK, is also required for the utilization of anhydro-N-acetylmuramic acid (anhMurNAc) either imported from the medium or derived from its own cell wall murein, and thus plays a role in cell wall recycling. This Pasteurella multocida (strain Pm70) protein is N-acetylmuramic acid 6-phosphate etherase.